Consider the following 428-residue polypeptide: 2,3-bisphosphoglycerate-independent phosphoglycerate mutase 2 (428 aa).

It belongs to the BPG-independent phosphoglycerate mutase family. A-PGAM subfamily.

The catalysed reaction is (2R)-2-phosphoglycerate = (2R)-3-phosphoglycerate. The protein operates within carbohydrate degradation; glycolysis; pyruvate from D-glyceraldehyde 3-phosphate: step 3/5. Catalyzes the interconversion of 2-phosphoglycerate and 3-phosphoglycerate. The polypeptide is 2,3-bisphosphoglycerate-independent phosphoglycerate mutase 2 (apgM2) (Methanocaldococcus jannaschii (strain ATCC 43067 / DSM 2661 / JAL-1 / JCM 10045 / NBRC 100440) (Methanococcus jannaschii)).